The sequence spans 345 residues: D-fructose 1,6-bisphosphatase class 2/sedoheptulose 1,7-bisphosphatase (345 aa).

Positions 33, 57, 97, and 100 each coordinate Mn(2+). Substrate is bound by residues 100 to 102 (EGT), tyrosine 131, 176 to 178 (RPR), and 198 to 200 (DGD). Glutamate 225 lines the Mn(2+) pocket.

Belongs to the FBPase class 2 family. As to quaternary structure, homotetramer. Mn(2+) serves as cofactor.

The enzyme catalyses beta-D-fructose 1,6-bisphosphate + H2O = beta-D-fructose 6-phosphate + phosphate. It catalyses the reaction D-sedoheptulose 1,7-bisphosphate + H2O = D-sedoheptulose 7-phosphate + phosphate. It functions in the pathway carbohydrate biosynthesis; Calvin cycle. In terms of biological role, catalyzes the hydrolysis of fructose 1,6-bisphosphate (Fru 1,6-P2) and sedoheptulose 1,7-bisphosphate (Sed 1,7-P2) to fructose 6-phosphate and sedoheptulose 7-phosphate, respectively. This chain is D-fructose 1,6-bisphosphatase class 2/sedoheptulose 1,7-bisphosphatase, found in Synechocystis sp. (strain ATCC 27184 / PCC 6803 / Kazusa).